The chain runs to 231 residues: SrfA-induced gene F protein (231 aa).

In Dictyostelium discoideum (Social amoeba), this protein is SrfA-induced gene F protein (sigF).